The primary structure comprises 143 residues: Peptide methionine sulfoxide reductase MsrB (143 aa).

A MsrB domain is found at 16–139 (DAELRRRLTP…NSAALNFESR (124 aa)). Zn(2+) contacts are provided by C55, C58, C104, and C107. Residue C128 is the Nucleophile of the active site.

Belongs to the MsrB Met sulfoxide reductase family. Zn(2+) is required as a cofactor.

It carries out the reaction L-methionyl-[protein] + [thioredoxin]-disulfide + H2O = L-methionyl-(R)-S-oxide-[protein] + [thioredoxin]-dithiol. The sequence is that of Peptide methionine sulfoxide reductase MsrB from Burkholderia ambifaria (strain ATCC BAA-244 / DSM 16087 / CCUG 44356 / LMG 19182 / AMMD) (Burkholderia cepacia (strain AMMD)).